The sequence spans 2367 residues: MSLVNRKQLEKMANVRFRVQEDEYVAILDALEEYHNMSENTVVEKYLKLKDINSLTDTYIDTYKKSGRNKALKKFKEYLVTEILELKNSNLTPVEKNLHFIWIGGQINDTAINYINQWKDVNSDYNVNVFYDSNAFLINTLKKTIIESASNDTLESFRENLNDPEFNHTAFFRKRMQIIYDKQQNFINYYKAQKEENPDLIIDDIVKTYLSNEYSKDIDELNAYIEESLNKVTENSGNDVRNFEEFKTGEVFNLYEQELVERWNLAGASDILRVAILKNIGGVYLDVDMLPGIHPDLFKDINKPDSVKTAVDWEEMQLEAIMKYKEYIPEYTSKHFDTLDEEVQSSFESVLASKSDKSEIFLPLGGIEVSPLEVKVAFAKGSIIDQALISAKDSYCSDLLIKQIQNRYKILNDTLGPIISQGNDFNTTMNNFGESLGAIANEENISFIAKIGSYLRVGFYPEANTTITLSGPTIYAGAYKDLLTFKEMSIDTSILSSELRNFEFPKVNISQATEQEKNSLWQFNEERAKIQFEEYKKNYFEGALGEDDNLDFSQNTVTDKEYLLEKISSSTKSSERGYVHYIVQLQGDKISYEAACNLFAKNPYDSILFQKNIEDSEVAYYYNPTDSEIQEIDKYRIPDRISDRPKIKLTLIGHGKAEFNTDIFAGLDVDSLSSEIETILDLAKADISPKSIEINLLGCNMFSYSVNVEETYPGKLLLRVKDKVSELMPSISQDSIIVSANQYEVRINSEGRRELLDHSGEWINKEESIIKDISSKEYISFNPKENKIIVKSKNLPELSTLLQEIRNNSNSSDIELEEKVMLAECEINVISNIETQVVEERIEEAKSLTSDSINYIKNEFKLIESISDALYDLKQQNELEESHFISFEDISKTDEGFSIRFIDKETGESIFVETEKAIFSEYANHITEEISKLKDTIFDTVNGKLVKKVTLDATHEVNTLNAAFFIQSLIGYNSSKESLSNLSVAMKVQVYAQLFSTGLNTITDAAKVVELVSTALDETIDLLPTLSEGLPVIATIIDGVSLGASIKELSETSDPLLRQEIEAKIGIMAVNLTAATTAIITSSLGIASGFSILLVPLAGISAGIPSLVNNELILRAEAKNVVDYFGHISLAESEGAFTLLDDKIMMPQDDLVISEIDFNNNSITLGKCEIWRMEGGSGHTVTDDIDHFFSAPSTTYREPYLSIYDVLDVKEEELDLSKDLMVLPNAPDRIFGWERGWTPGLRSLENDGTKLLDRIRDHYEGQFYWRFFAFIADSVITKLKPRYEDTNIRISLDSNTRSFIVPVITTEYIREKLSYSFYGSGGTYALSLSQYNMNINIELNENDTWVIDVDNVVRDVTIESDKIKKGDLIENILSKLSIEDNKIILDNHEINFSGTLNGGNGFVSLTFSILEGINAVIEVDLLSKSYKVLISGELKTLMANSNSVQQKIDYIGLNSELQKNIPYSFMDDEGKENGFINCFTKEGLFVSELSDVVLIIKVYMDNSKPPFGYYSNDLKDVKVITKDDVIIITGYYLKDDIKISLSFTIQDKNTIKLNGVYLDENGVAEILKFMNKKGSTNTSDSLMSFLESMNIKSIFIKSLKSNAKLILDTNFIISGTTFIGQFEFICDKDNNIQPYFIKFNTLETKYTLYVGNRQNMIVEPNYNLDDSGDISSTVINFSQKYLYGIDSCVNKVVISPGIYTDEINITPVHEANNTYPEVIVLDTNYISEKINININDLSIRYVWSNDGSDFILMSTDEENKVSQVKIRFTNVFKGNTISDKISFNFSDKQDISINKIISTFTPSYYVEGLLNYDLGLISLYNEKFYINNLGMMVSGLVYINDSLYYFKPPIKNLITGFTTIGDDKYYFNPDNGGPASVGETIIDGKNYYFSQNGVLQTGVFSTEDGFKYFAPADTLDENLEGEAIDFTGKLIIDENVYYFGDNYRAAIEWQTLDDEVYYFSTDTGRAFKGLNQIGDDKFYFNSDGIMQKGFVNINDKTFYFDDSGVMKSGYTEIDGRYFYFAENGEMQIGVFNTADGFKYFAHHDEDLGNEEGEALSYSGILNFNNKIYYFDDSFTAVVGWKDLEDGSKYYFDENTAEASIGISIINDGKYYFNDSGIMQIGFVTINNEVFYFSDSGIVESGMQNIDDNYFYISENGLVQIGVFDTSDGYKYFAPANTVNDNIYGQAVEYSGLVRVNEDVYSFGESYTIETGWIYDSENESDKYYFDPEAKKAYKGINVIDDIKYYFDENGIMRTGLITFEDNHYYFNEDGEMQYGYLNIEDKMFYFSEDGIMQIGVFNTPDGFKYFAHQNTLDENFEGESINYTGWLDLDEKRYYFTDEYIAATGSVIIDGEEYYFDPDTAQLVISE.

The interval 2–91 is four-helical bundle; it reads SLVNRKQLEK…EILELKNSNL (90 aa). One can recognise a GT44 domain in the interval 96–469; sequence KNLHFIWIGG…YPEANTTITL (374 aa). The interval 96–469 is glucosyltransferase region; the sequence is KNLHFIWIGG…YPEANTTITL (374 aa). Residues 101 to 103, N139, 269 to 273, and 286 to 288 each bind UDP-alpha-D-glucose; these read IWI, SDILR, and DVD. Residues D286, D288, and E516 each contribute to the Mg(2+) site. 519–521 contributes to the UDP-alpha-D-glucose binding site; the sequence is SLW. Residues 545 to 800 form an autoprocessing region region; the sequence is GEDDNLDFSQ…KSKNLPELST (256 aa). The Zn(2+) site is built by E546 and D547. A Peptidase C80 domain is found at 568-775; it reads SSSTKSSERG…EESIIKDISS (208 aa). Positions 578, 601, and 648 each coordinate 1D-myo-inositol hexakisphosphate. H654 lines the Zn(2+) pocket. H654 acts as the For protease activity in catalysis. C699 (nucleophile; for protease activity) is an active-site residue. H758 provides a ligand contact to Zn(2+). The 1D-myo-inositol hexakisphosphate site is built by K765, K776, and K793. The tract at residues 801-1501 is translocation region; sequence LLQEIRNNSN…VVLIIKVYMD (701 aa). 3 interaction with host frizzled receptors FZD1, FZD2 and FZD7 regions span residues 1434–1439, 1487–1512, and 1598–1600; these read LKTLMA, SELS…YYSN, and SLK. Cell wall-binding repeat units follow at residues 1833–1852, 1854–1873, 1876–1895, 1926–1945, 1946–1965, 1967–1986, 1987–2006, 2007–2026, 2057–2076, 2077–2097, 2099–2118, 2119–2138, 2139–2158, 2209–2231, 2233–2252, 2253–2272, 2273–2292, 2323–2342, and 2343–2362; these read VSGL…PIKN, ITGF…DNGG, SVGE…NGVL, FTGK…NYRA, AIEW…DTGR, FKGL…DGIM, QKGF…SGVM, KSGY…NGEM, YSGI…SFTA, VVGW…NTAE, SIGI…SGIM, QIGF…SGIV, ESGM…NGLV, ETGW…EAKK, YKGI…NGIM, RTGL…DGEM, QYGY…DGIM, YTGW…EYIA, and ATGS…DTAQ. The segment at 1835–2367 is receptor-binding (CROPS) region; the sequence is GLVYINDSLY…PDTAQLVISE (533 aa).

This sequence belongs to the clostridial glucosylating toxin (LCGT) family. Interacts with host FZD1. Interacts with host FZD2; interaction promotes toxin entry into host cell and occupies the binding site for Wnt-adducted palmitoleate in FZD2, leading to prevent Wnt-binding and downstream Wnt signaling. Interacts with host FZD7. Interacts with host CSPG4. Interacts with host NECTIN3/PVRL3. Requires Zn(2+) as cofactor. Mn(2+) is required as a cofactor. Mg(2+) serves as cofactor. In terms of processing, undergoes autocatalytic cleavage to release the N-terminal part (Glucosyltransferase TcdB), which constitutes the active part of the toxin, in the host cytosol. 1D-myo-inositol hexakisphosphate-binding (InsP6) activates the peptidase C80 domain and promotes autoprocessing.

Its subcellular location is the secreted. The protein resides in the host endosome membrane. It is found in the host cytoplasm. It localises to the host cytosol. The protein localises to the host cell membrane. The enzyme catalyses L-threonyl-[protein] + UDP-alpha-D-glucose = 3-O-(alpha-D-glucosyl)-L-threonyl-[protein] + UDP + H(+). Its activity is regulated as follows. Protease activity is activated upon binding to 1D-myo-inositol hexakisphosphate (InsP6), which induces conformational reorganization. In terms of biological role, precursor of a cytotoxin that targets and disrupts the colonic epithelium, inducing the host inflammatory and innate immune responses and resulting in diarrhea and pseudomembranous colitis. TcdB constitutes the main toxin that mediates the pathology of C.difficile infection, an opportunistic pathogen that colonizes the colon when the normal gut microbiome is disrupted. Compared to TcdA, TcdB is more virulent and more important for inducing the host inflammatory and innate immune responses. This form constitutes the precursor of the toxin: it enters into host cells and mediates autoprocessing to release the active toxin (Glucosyltransferase TcdB) into the host cytosol. Targets colonic epithelia by binding to the frizzled receptors FZD1, FZD2 and FZD7, and enters host cells via clathrin-mediated endocytosis. Frizzled receptors constitute the major host receptors in the colonic epithelium, but other receptors, such as CSPG4 or NECTIN3/PVRL3, have been identified. Binding to carbohydrates and sulfated glycosaminoglycans on host cell surface also contribute to entry into cells. Once entered into host cells, acidification in the endosome promotes the membrane insertion of the translocation region and formation of a pore, leading to translocation of the GT44 and peptidase C80 domains across the endosomal membrane. This activates the peptidase C80 domain and autocatalytic processing, releasing the N-terminal part (Glucosyltransferase TcdB), which constitutes the active part of the toxin, in the cytosol. Active form of the toxin, which is released into the host cytosol following autoprocessing and inactivates small GTPases. Acts by mediating monoglucosylation of small GTPases of the Rho family (Rac1, RhoA, RhoB, RhoC, RhoG and Cdc42) in host cells at the conserved threonine residue located in the switch I region ('Thr-37/35'), using UDP-alpha-D-glucose as the sugar donor. Monoglucosylation of host small GTPases completely prevents the recognition of the downstream effector, blocking the GTPases in their inactive form, leading to actin cytoskeleton disruption and cell death, resulting in the loss of colonic epithelial barrier function. In Clostridioides difficile (Peptoclostridium difficile), this protein is Toxin B.